A 435-amino-acid chain; its full sequence is Amidase 1 (435 aa).

Active-site charge relay system residues include lysine 38 and serine 115. Serine 139 (acyl-ester intermediate) is an active-site residue.

Belongs to the amidase family.

It localises to the cytoplasm. It is found in the nucleus. The protein resides in the nucleoplasm. The catalysed reaction is a monocarboxylic acid amide + H2O = a monocarboxylate + NH4(+). Functionally, amidase involved in auxin biosynthesis. Converts indole-3-acetamide (IAM) to indole-3-acetate, and phenyl-2-acetamide (PAM) to phenyl-2-acetate. Substrate preference is PAM &gt; IAM. This Oryza sativa subsp. japonica (Rice) protein is Amidase 1.